A 466-amino-acid polypeptide reads, in one-letter code: Ribulose bisphosphate carboxylase large chain (466 aa).

K4 carries the N6,N6,N6-trimethyllysine modification. Residues N113 and T163 each contribute to the substrate site. The Proton acceptor role is filled by K165. K167 contacts substrate. Mg(2+) is bound by residues K191, D193, and E194. An N6-carboxylysine modification is found at K191. The active-site Proton acceptor is H284. Residues R285, H317, and S369 each contribute to the substrate site.

It belongs to the RuBisCO large chain family. Type I subfamily. In terms of assembly, heterohexadecamer of 8 large chains and 8 small chains; disulfide-linked. The disulfide link is formed within the large subunit homodimers. It depends on Mg(2+) as a cofactor. The disulfide bond which can form in the large chain dimeric partners within the hexadecamer appears to be associated with oxidative stress and protein turnover.

The protein resides in the plastid. It is found in the chloroplast. It carries out the reaction 2 (2R)-3-phosphoglycerate + 2 H(+) = D-ribulose 1,5-bisphosphate + CO2 + H2O. It catalyses the reaction D-ribulose 1,5-bisphosphate + O2 = 2-phosphoglycolate + (2R)-3-phosphoglycerate + 2 H(+). Functionally, ruBisCO catalyzes two reactions: the carboxylation of D-ribulose 1,5-bisphosphate, the primary event in carbon dioxide fixation, as well as the oxidative fragmentation of the pentose substrate in the photorespiration process. Both reactions occur simultaneously and in competition at the same active site. This Aphelandra sinclairiana (Orange shrimp plant) protein is Ribulose bisphosphate carboxylase large chain.